We begin with the raw amino-acid sequence, 476 residues long: Bifunctional protein HldE (476 aa).

The ribokinase stretch occupies residues 1 to 319 (MKVSLPAFEK…EALALHHGES (319 aa)). 195-198 (NMSE) is a binding site for ATP. Aspartate 264 is a catalytic residue. The tract at residues 345–476 (MTNGCFDILH…AIIQNIMAKQ (132 aa)) is cytidylyltransferase.

This sequence in the N-terminal section; belongs to the carbohydrate kinase PfkB family. It in the C-terminal section; belongs to the cytidylyltransferase family. Homodimer.

It carries out the reaction D-glycero-beta-D-manno-heptose 7-phosphate + ATP = D-glycero-beta-D-manno-heptose 1,7-bisphosphate + ADP + H(+). The catalysed reaction is D-glycero-beta-D-manno-heptose 1-phosphate + ATP + H(+) = ADP-D-glycero-beta-D-manno-heptose + diphosphate. It functions in the pathway nucleotide-sugar biosynthesis; ADP-L-glycero-beta-D-manno-heptose biosynthesis; ADP-L-glycero-beta-D-manno-heptose from D-glycero-beta-D-manno-heptose 7-phosphate: step 1/4. Its pathway is nucleotide-sugar biosynthesis; ADP-L-glycero-beta-D-manno-heptose biosynthesis; ADP-L-glycero-beta-D-manno-heptose from D-glycero-beta-D-manno-heptose 7-phosphate: step 3/4. Its function is as follows. Catalyzes the phosphorylation of D-glycero-D-manno-heptose 7-phosphate at the C-1 position to selectively form D-glycero-beta-D-manno-heptose-1,7-bisphosphate. Functionally, catalyzes the ADP transfer from ATP to D-glycero-beta-D-manno-heptose 1-phosphate, yielding ADP-D-glycero-beta-D-manno-heptose. The sequence is that of Bifunctional protein HldE from Shewanella sp. (strain MR-4).